The sequence spans 246 residues: Large ribosomal subunit protein uL3 (246 aa).

Q151 carries the post-translational modification N5-methylglutamine.

It belongs to the universal ribosomal protein uL3 family. In terms of assembly, part of the 50S ribosomal subunit. Forms a cluster with proteins L14 and L19. In terms of processing, methylated by PrmB.

In terms of biological role, one of the primary rRNA binding proteins, it binds directly near the 3'-end of the 23S rRNA, where it nucleates assembly of the 50S subunit. In Bartonella quintana (strain Toulouse) (Rochalimaea quintana), this protein is Large ribosomal subunit protein uL3.